Here is a 363-residue protein sequence, read N- to C-terminus: G-protein coupled receptor 6 (363 aa).

Over 1 to 75 the chain is Extracellular; it reads MNASAAALNE…SGLLLSAVNP (75 aa). Asn-2 and Asn-9 each carry an N-linked (GlcNAc...) asparagine glycan. The interval 29 to 48 is disordered; it reads GAPDTGEWGPPAASAALGGG. A glycan (N-linked (GlcNAc...) asparagine) is linked at Asn-52. A helical transmembrane segment spans residues 76 to 95; that stretch reads WDVLLCVSGTVIAGENALVV. Over 96 to 107 the chain is Cytoplasmic; that stretch reads ALIASTPALRTP. A helical membrane pass occupies residues 108–131; that stretch reads MFVLVGSLATADLLAGCGLILHFV. Residues 132-143 are Extracellular-facing; sequence FQYVVPSETVSL. Residues 144 to 165 traverse the membrane as a helical segment; that stretch reads LMVGFLVASFAASVSSLLAITV. Residues 166–186 are Cytoplasmic-facing; that stretch reads DRYLSLYNALTYYSRRTLLGV. Residues 187–206 form a helical membrane-spanning segment; the sequence is HLLLAATWTVSLGLGLLPVL. The Extracellular portion of the chain corresponds to 207-231; the sequence is GWNCLADRTSCSVVRPLTRSHVALL. The helical transmembrane segment at 232–250 threads the bilayer; it reads STSFFVVFGIMLHLYVRIC. At 251 to 278 the chain is on the cytoplasmic side; that stretch reads QVVWRHAHQIALQQHCLAPPHLAATRKG. Residues 279–305 form a helical membrane-spanning segment; sequence VGTLAVVLGTFGASWLPFAIYCVVGSQ. The Extracellular segment spans residues 306–310; that stretch reads EDPAI. Residues 311 to 332 traverse the membrane as a helical segment; it reads YTYATLLPATYNSMINPIIYAF. Residues 333–363 lie on the Cytoplasmic side of the membrane; it reads RNQEIQRALWLLFCGCFQSKVPFRSRSPSEV. Cys-346 carries the S-palmitoyl cysteine lipid modification. Phosphoserine is present on residues Ser-357, Ser-359, and Ser-361.

This sequence belongs to the G-protein coupled receptor 1 family. As to expression, mainly expressed in the brain. Selectively expressed in striatopallidal neurons in the striatum.

The protein resides in the cell membrane. Orphan receptor with constitutive G(s) signaling activity that activate cyclic AMP. Promotes neurite outgrowth and blocks myelin inhibition in neurons. The sequence is that of G-protein coupled receptor 6 (Gpr6) from Mus musculus (Mouse).